Consider the following 70-residue polypeptide: Chondroitin proteoglycan 9 (70 aa).

Positions 1–19 (MNFWHLLLLAVLFFVTVFG) are cleaved as a signal peptide. O-linked (Xyl...) (chondroitin sulfate) serine glycans are attached at residues Ser-25 and Ser-27.

In Caenorhabditis briggsae, this protein is Chondroitin proteoglycan 9 (cpg-9).